A 390-amino-acid polypeptide reads, in one-letter code: Magnesium-protoporphyrin IX monomethyl ester [oxidative] cyclase (390 aa).

The disordered stretch occupies residues 1 to 20 (MSQSTIESTNKKEINKGKAP).

The protein belongs to the AcsF family. The cofactor is Fe cation.

The enzyme catalyses Mg-protoporphyrin IX 13-monomethyl ester + 3 NADPH + 3 O2 + 2 H(+) = 3,8-divinyl protochlorophyllide a + 3 NADP(+) + 5 H2O. Its pathway is porphyrin-containing compound metabolism; chlorophyll biosynthesis (light-independent). Its function is as follows. Catalyzes the formation of the isocyclic ring in chlorophyll biosynthesis. Mediates the cyclase reaction, which results in the formation of divinylprotochlorophyllide (Pchlide) characteristic of all chlorophylls from magnesium-protoporphyrin IX 13-monomethyl ester (MgPMME). The polypeptide is Magnesium-protoporphyrin IX monomethyl ester [oxidative] cyclase (Prochlorococcus marinus (strain MIT 9301)).